The chain runs to 298 residues: Inosose dehydratase (298 aa).

The protein belongs to the IolE/MocC family. It depends on glutathione as a cofactor. Requires Co(2+) as cofactor. Mn(2+) is required as a cofactor.

The enzyme catalyses scyllo-inosose = 3D-3,5/4-trihydroxycyclohexane-1,2-dione + H2O. It functions in the pathway polyol metabolism; myo-inositol degradation into acetyl-CoA; acetyl-CoA from myo-inositol: step 2/7. Its function is as follows. Catalyzes the dehydration of inosose (2-keto-myo-inositol, 2KMI or 2,4,6/3,5-pentahydroxycyclohexanone) to 3D-(3,5/4)-trihydroxycyclohexane-1,2-dione (D-2,3-diketo-4-deoxy-epi-inositol). The polypeptide is Inosose dehydratase (Bacillus anthracis (strain CDC 684 / NRRL 3495)).